Consider the following 278-residue polypeptide: 4-hydroxy-3-methylbut-2-enyl diphosphate reductase (278 aa).

A [4Fe-4S] cluster-binding site is contributed by cysteine 12. Residues histidine 41 and histidine 74 each coordinate (2E)-4-hydroxy-3-methylbut-2-enyl diphosphate. Histidine 41 and histidine 74 together coordinate dimethylallyl diphosphate. The isopentenyl diphosphate site is built by histidine 41 and histidine 74. Cysteine 96 lines the [4Fe-4S] cluster pocket. Position 124 (histidine 124) interacts with (2E)-4-hydroxy-3-methylbut-2-enyl diphosphate. A dimethylallyl diphosphate-binding site is contributed by histidine 124. Residue histidine 124 participates in isopentenyl diphosphate binding. Glutamate 126 serves as the catalytic Proton donor. Position 161 (threonine 161) interacts with (2E)-4-hydroxy-3-methylbut-2-enyl diphosphate. Cysteine 189 provides a ligand contact to [4Fe-4S] cluster. Residues serine 217, asparagine 219, and serine 261 each coordinate (2E)-4-hydroxy-3-methylbut-2-enyl diphosphate. Dimethylallyl diphosphate contacts are provided by serine 217, asparagine 219, and serine 261. Isopentenyl diphosphate is bound by residues serine 217, asparagine 219, and serine 261.

The protein belongs to the IspH family. The cofactor is [4Fe-4S] cluster.

It catalyses the reaction isopentenyl diphosphate + 2 oxidized [2Fe-2S]-[ferredoxin] + H2O = (2E)-4-hydroxy-3-methylbut-2-enyl diphosphate + 2 reduced [2Fe-2S]-[ferredoxin] + 2 H(+). The catalysed reaction is dimethylallyl diphosphate + 2 oxidized [2Fe-2S]-[ferredoxin] + H2O = (2E)-4-hydroxy-3-methylbut-2-enyl diphosphate + 2 reduced [2Fe-2S]-[ferredoxin] + 2 H(+). It participates in isoprenoid biosynthesis; dimethylallyl diphosphate biosynthesis; dimethylallyl diphosphate from (2E)-4-hydroxy-3-methylbutenyl diphosphate: step 1/1. The protein operates within isoprenoid biosynthesis; isopentenyl diphosphate biosynthesis via DXP pathway; isopentenyl diphosphate from 1-deoxy-D-xylulose 5-phosphate: step 6/6. Its function is as follows. Catalyzes the conversion of 1-hydroxy-2-methyl-2-(E)-butenyl 4-diphosphate (HMBPP) into a mixture of isopentenyl diphosphate (IPP) and dimethylallyl diphosphate (DMAPP). Acts in the terminal step of the DOXP/MEP pathway for isoprenoid precursor biosynthesis. The polypeptide is 4-hydroxy-3-methylbut-2-enyl diphosphate reductase (Anaeromyxobacter sp. (strain K)).